The primary structure comprises 66 residues: Photosystem II reaction center protein H (66 aa).

A helical membrane pass occupies residues 29 to 49 (PIMGLTMVLFLVFLLIILQIY).

Belongs to the PsbH family. As to quaternary structure, PSII is composed of 1 copy each of membrane proteins PsbA, PsbB, PsbC, PsbD, PsbE, PsbF, PsbH, PsbI, PsbJ, PsbK, PsbL, PsbM, PsbT, PsbX, PsbY, PsbZ, Psb30/Ycf12, at least 3 peripheral proteins of the oxygen-evolving complex and a large number of cofactors. It forms dimeric complexes.

Its subcellular location is the plastid. The protein resides in the chloroplast thylakoid membrane. In terms of biological role, one of the components of the core complex of photosystem II (PSII), required for its stability and/or assembly. PSII is a light-driven water:plastoquinone oxidoreductase that uses light energy to abstract electrons from H(2)O, generating O(2) and a proton gradient subsequently used for ATP formation. It consists of a core antenna complex that captures photons, and an electron transfer chain that converts photonic excitation into a charge separation. This Thalassiosira pseudonana (Marine diatom) protein is Photosystem II reaction center protein H.